Reading from the N-terminus, the 154-residue chain is Large ribosomal subunit protein uL23 (154 aa).

Belongs to the universal ribosomal protein uL23 family.

In terms of biological role, this protein binds to a specific region on the 26S rRNA. The polypeptide is Large ribosomal subunit protein uL23 (RPL23A) (Fritillaria agrestis (Stinkbells)).